A 411-amino-acid polypeptide reads, in one-letter code: Formate-dependent phosphoribosylglycinamide formyltransferase (411 aa).

Residue 25-26 (EL) coordinates N(1)-(5-phospho-beta-D-ribosyl)glycinamide. ATP is bound by residues R118, K159, 164–169 (SSGAGQ), 199–202 (EQYI), and E207. The 196-residue stretch at 123–318 (TFAHDKLGLP…EFDLHARAIL (196 aa)) folds into the ATP-grasp domain. E277 and E289 together coordinate Mg(2+). Residues D296, K366, and 373–374 (RR) each bind N(1)-(5-phospho-beta-D-ribosyl)glycinamide.

It belongs to the PurK/PurT family. In terms of assembly, homodimer.

It catalyses the reaction N(1)-(5-phospho-beta-D-ribosyl)glycinamide + formate + ATP = N(2)-formyl-N(1)-(5-phospho-beta-D-ribosyl)glycinamide + ADP + phosphate + H(+). It participates in purine metabolism; IMP biosynthesis via de novo pathway; N(2)-formyl-N(1)-(5-phospho-D-ribosyl)glycinamide from N(1)-(5-phospho-D-ribosyl)glycinamide (formate route): step 1/1. Involved in the de novo purine biosynthesis. Catalyzes the transfer of formate to 5-phospho-ribosyl-glycinamide (GAR), producing 5-phospho-ribosyl-N-formylglycinamide (FGAR). Formate is provided by PurU via hydrolysis of 10-formyl-tetrahydrofolate. The sequence is that of Formate-dependent phosphoribosylglycinamide formyltransferase from Corynebacterium jeikeium (strain K411).